The primary structure comprises 966 residues: Calsyntenin-2 (966 aa).

The N-terminal stretch at 1-20 is a signal peptide; that stretch reads MLPGRLCLVPLLLALGVGSG. The Extracellular portion of the chain corresponds to 21 to 835; sequence GGSGDGGDSR…SIQRSSVVPS (815 aa). Cadherin domains are found at residues 46-162 and 163-282; these read IETS…APTF and KEPA…MPLF. Asparagine 58 and asparagine 100 each carry an N-linked (GlcNAc...) asparagine glycan. Asparagine 344, asparagine 376, asparagine 720, and asparagine 733 each carry an N-linked (GlcNAc...) asparagine glycan. Residues 836–856 form a helical membrane-spanning segment; sequence IATVVIIISVCMLVFVVAMGV. Over 857–966 the chain is Cytoplasmic; sequence YRVRIAHQHF…NTAGVINIWK (110 aa). Residues 890–966 are disordered; sequence NPMEKHEGPG…NTAGVINIWK (77 aa). A compositionally biased stretch (acidic residues) spans 901 to 916; that stretch reads GEDETTEVEEEEEAEE. Over residues 943 to 960 the composition is skewed to polar residues; sequence QSGTSSQSPERSTWNTAG.

It belongs to the calsyntenin family. Proteolytically processed under normal cellular conditions. A primary zeta-cleavage generates a large extracellular (soluble) N-terminal domain (sAlc) and a short C-terminal transmembrane fragment (CTF1). A secondary cleavage catalyzed by gamma-secretase within the transmembrane domain releases the beta-Alc-gamma chain in the extracellular milieu and produces an intracellular fragment (AlcICD). This processing is strongly suppressed in the tripartite complex formed with APBA2 and APP, which seems to prevent the association with PSEN1. As to expression, restricted to the brain. In the cerebral cortex, found in the somas and neuropil of all layers. Expressed at highest levels in neurons of cortical layers 5 and 6 and, at lower levels, in neurons of the upper layers. Highly expressed in Purkinje cells. Also found in a few scattered interneurons throughout the granule cell layer and occasionally in neurons in the molecular layer (at protein level). Present throughout all cortical layers, highest levels in GABAergic neurons (based on morphology and distribution pattern).

The protein localises to the postsynaptic cell membrane. It localises to the endoplasmic reticulum membrane. It is found in the golgi apparatus membrane. Its subcellular location is the cell projection. The protein resides in the dendrite. In terms of biological role, postsynaptic adhesion molecule that binds to presynaptic neurexins to mediate synapse formation, and which is involved in learning and memory. Promotes synapse development by acting as a cell adhesion molecule at the postsynaptic membrane, which associates with neurexin-alpha at the presynaptic membrane. The polypeptide is Calsyntenin-2 (Mus musculus (Mouse)).